Here is a 40-residue protein sequence, read N- to C-terminus: Submaxillary gland androgen-regulated protein 2, isoform epsilon (40 aa).

The N-terminal stretch at 1 to 20 is a signal peptide; it reads MKALYMVFVLWVLIGCFLRC.

The protein resides in the secreted. In terms of biological role, may play a role in protection or detoxification. This Mus musculus (Mouse) protein is Submaxillary gland androgen-regulated protein 2, isoform epsilon (Smr2).